The chain runs to 429 residues: MQYVMGRTNSMTRGFLNKRRVLEKCRTAKQKIHYCISRYFHYLPPVLAILLPIGSWPFLSEQQWWYGSFLFPVVSSLGWLFAIGRRERQLRAAAGQLLEAKIRKLTEQDEGLKNIRETIEKRQKETDRLKLHNDKLVEQLGQAREVFIQAKGRYDHMEELSRRLKEENQQLQIQLEAAVRERNEKILENQELLQELKETLAYQQELHDEYQATFVEQHSMLDKRQAYIGNLEAKVQDLMCELRNLLQLEMGAKTNLPGKPVASRDVVAQLVLEFRKIVFRVETTEAADSLTALRYTRTDPSAHNYSLACRQLFDGLREENLGMLFIYAPFAQRVLFANALFNDWTGYGLEDFLNRESDVVLEGFAQWERDLLTESRVERSGKIVIKTKAFGATPFYYCVVTLDKGPFAQHILGVLYPAKASFFTNLSYI.

The protein belongs to the UPF0242 family.

The protein is UPF0242 protein CT_616 of Chlamydia trachomatis serovar D (strain ATCC VR-885 / DSM 19411 / UW-3/Cx).